Reading from the N-terminus, the 285-residue chain is Energy-coupling factor transporter ATP-binding protein EcfA2 (285 aa).

Residues 6–242 (LKVEELNYNY…KEVIRKVNLR (237 aa)) form the ABC transporter domain. 39–46 (GGNGVGKS) is an ATP binding site.

It belongs to the ABC transporter superfamily. Energy-coupling factor EcfA family. In terms of assembly, forms a stable energy-coupling factor (ECF) transporter complex composed of 2 membrane-embedded substrate-binding proteins (S component), 2 ATP-binding proteins (A component) and 2 transmembrane proteins (T component).

The protein resides in the cell membrane. ATP-binding (A) component of a common energy-coupling factor (ECF) ABC-transporter complex. Unlike classic ABC transporters this ECF transporter provides the energy necessary to transport a number of different substrates. The polypeptide is Energy-coupling factor transporter ATP-binding protein EcfA2 (Clostridium perfringens (strain SM101 / Type A)).